The following is a 229-amino-acid chain: Large ribosomal subunit protein uL1 (229 aa).

Belongs to the universal ribosomal protein uL1 family. As to quaternary structure, part of the 50S ribosomal subunit.

Functionally, binds directly to 23S rRNA. The L1 stalk is quite mobile in the ribosome, and is involved in E site tRNA release. Its function is as follows. Protein L1 is also a translational repressor protein, it controls the translation of the L11 operon by binding to its mRNA. The chain is Large ribosomal subunit protein uL1 from Mannheimia succiniciproducens (strain KCTC 0769BP / MBEL55E).